We begin with the raw amino-acid sequence, 306 residues long: Mitochondrial brown fat uncoupling protein 1 (306 aa).

The Mitochondrial intermembrane segment spans residues 1–10; that stretch reads MVGTTTTDVP. The helical transmembrane segment at 11-32 threads the bilayer; the sequence is PTMGVKIFSAGVAACLADVITF. 3 Solcar repeats span residues 11–102, 110–200, and 209–294; these read PTMG…VQEF, PSLG…MKGA, and DDVP…LKGE. Over 33-73 the chain is Mitochondrial matrix; sequence PLDTAKVRQQIQGEFPITSGIRYKGVLGTITTLAKTEGPLK. Position 56 (lysine 56) interacts with fatty acid 16:0. A helical transmembrane segment spans residues 74–96; sequence LYSGLPAGLQRQISFASLRIGLY. Residues 97–115 lie on the Mitochondrial intermembrane side of the membrane; sequence DTVQEFFTSGEETPSLGSK. The helical transmembrane segment at 116 to 132 threads the bilayer; it reads ISAGLTTGGVAVFIGQP. The Mitochondrial matrix portion of the chain corresponds to 133–177; sequence TEVVKVRLQAQSHLHGLKPRYTGTYNAYRIIATTESLTSLWKGTT. Residues 178–194 form a helical membrane-spanning segment; that stretch reads PNLLRNVIINCTELVTY. Topologically, residues 195 to 211 are mitochondrial intermembrane; it reads DLMKGALVRNEILADDV. The chain crosses the membrane as a helical span at residues 212 to 231; that stretch reads PCHFVSALIAGFCTTLLSSP. At 232–265 the chain is on the mitochondrial matrix side; it reads VDVVKTRFINSPPGQYASVPNCAMTMFTKEGPTA. Cysteine sulfenic acid (-SOH) is present on cysteine 253. A helical transmembrane segment spans residues 266–288; sequence FFKGFVPSFLRLGSWNVIMFVCF. Position 268 (lysine 268) interacts with fatty acid 16:0. Topologically, residues 289 to 306 are mitochondrial intermembrane; that stretch reads EKLKGELMRSRQTVDCAT.

Belongs to the mitochondrial carrier (TC 2.A.29) family. As to quaternary structure, most probably functions as a monomer. Binds one purine nucleotide per monomer. However, has also been suggested to function as a homodimer or a homotetramer. Tightly associates with cardiolipin in the mitochondrion inner membrane; may stabilize and regulate its activity. May undergo sulfenylation upon cold exposure. May increase the sensitivity of UCP1 thermogenic function to the activation by noradrenaline probably through structural effects. In terms of processing, may undergo ubiquitin-mediated proteasomal degradation. Brown adipose tissue.

It is found in the mitochondrion inner membrane. It catalyses the reaction H(+)(in) = H(+)(out). Its activity is regulated as follows. Has no constitutive proton transporter activity and has to be activated by long-chain fatty acids/LCFAs. Inhibited by purine nucleotides. Both purine nucleotides and LCFAs bind the cytosolic side of the transporter and directly compete to activate or inhibit it. Activated by noradrenaline and reactive oxygen species. Despite lacking canonical translational encoding for selenocysteine, a small pool of the protein has been observed to selectively incorporate selenocysteine at 'Cys-253'. Selenocysteine-modified protein is highly sensitive to redox modification and may constitute a pool of protein highly sensitive to activation by elevated levels of reactive oxygen species (ROS). Its function is as follows. Mitochondrial protein responsible for thermogenic respiration, a specialized capacity of brown adipose tissue and beige fat that participates in non-shivering adaptive thermogenesis to temperature and diet variations and more generally to the regulation of energy balance. Functions as a long-chain fatty acid/LCFA and proton symporter, simultaneously transporting one LCFA and one proton through the inner mitochondrial membrane. However, LCFAs remaining associated with the transporter via their hydrophobic tails, it results in an apparent transport of protons activated by LCFAs. Thereby, dissipates the mitochondrial proton gradient and converts the energy of substrate oxydation into heat instead of ATP. Regulates the production of reactive oxygen species/ROS by mitochondria. The protein is Mitochondrial brown fat uncoupling protein 1 of Oryctolagus cuniculus (Rabbit).